Here is an 804-residue protein sequence, read N- to C-terminus: Phenylalanine--tRNA ligase beta subunit (804 aa).

Residues 40-153 (PLPDLRVVVG…SSYAVGEPFA (114 aa)) form the tRNA-binding domain. In terms of domain architecture, B5 spans 400–476 (PALLVLPFRP…RLHGYDNIEA (77 aa)). Mg(2+) is bound by residues D454, D460, E463, and E464. The FDX-ACB domain occupies 710 to 802 (SKFPAVQRDL…AESKLGAVIR (93 aa)).

The protein belongs to the phenylalanyl-tRNA synthetase beta subunit family. Type 1 subfamily. As to quaternary structure, tetramer of two alpha and two beta subunits. Mg(2+) is required as a cofactor.

Its subcellular location is the cytoplasm. The enzyme catalyses tRNA(Phe) + L-phenylalanine + ATP = L-phenylalanyl-tRNA(Phe) + AMP + diphosphate + H(+). This is Phenylalanine--tRNA ligase beta subunit from Chlorobium luteolum (strain DSM 273 / BCRC 81028 / 2530) (Pelodictyon luteolum).